The following is a 683-amino-acid chain: Methionine--tRNA ligase (683 aa).

The 'HIGH' region signature appears at proline 14 to histidine 24. Cysteine 145, cysteine 148, cysteine 158, and cysteine 161 together coordinate Zn(2+). Residues lysine 331–serine 335 carry the 'KMSKS' region motif. Lysine 334 is an ATP binding site. In terms of domain architecture, tRNA-binding spans alanine 581–lysine 683.

It belongs to the class-I aminoacyl-tRNA synthetase family. MetG type 1 subfamily. As to quaternary structure, homodimer. Requires Zn(2+) as cofactor.

It is found in the cytoplasm. It catalyses the reaction tRNA(Met) + L-methionine + ATP = L-methionyl-tRNA(Met) + AMP + diphosphate. Functionally, is required not only for elongation of protein synthesis but also for the initiation of all mRNA translation through initiator tRNA(fMet) aminoacylation. The sequence is that of Methionine--tRNA ligase from Pseudomonas fluorescens (strain SBW25).